The sequence spans 314 residues: Ribosomal protein L11 methyltransferase (314 aa).

Positions 164, 185, 207, and 249 each coordinate S-adenosyl-L-methionine.

This sequence belongs to the methyltransferase superfamily. PrmA family.

Its subcellular location is the cytoplasm. It catalyses the reaction L-lysyl-[protein] + 3 S-adenosyl-L-methionine = N(6),N(6),N(6)-trimethyl-L-lysyl-[protein] + 3 S-adenosyl-L-homocysteine + 3 H(+). In terms of biological role, methylates ribosomal protein L11. This chain is Ribosomal protein L11 methyltransferase, found in Clostridium beijerinckii (strain ATCC 51743 / NCIMB 8052) (Clostridium acetobutylicum).